Reading from the N-terminus, the 448-residue chain is Phosphoglucosamine mutase (448 aa).

S89 serves as the catalytic Phosphoserine intermediate. Mg(2+) contacts are provided by S89, D232, D234, and D236. S89 is modified (phosphoserine).

Belongs to the phosphohexose mutase family. Forms large aggregates. It depends on Mg(2+) as a cofactor. In terms of processing, activated by phosphorylation.

It catalyses the reaction alpha-D-glucosamine 1-phosphate = D-glucosamine 6-phosphate. Its function is as follows. Catalyzes the conversion of glucosamine-6-phosphate to glucosamine-1-phosphate. The polypeptide is Phosphoglucosamine mutase (glmM) (Methanocaldococcus jannaschii (strain ATCC 43067 / DSM 2661 / JAL-1 / JCM 10045 / NBRC 100440) (Methanococcus jannaschii)).